Reading from the N-terminus, the 461-residue chain is Kynurenine 3-monooxygenase (461 aa).

FAD contacts are provided by residues 17 to 18 (LA), 37 to 39 (ERR), and Ala-56. Residues Arg-84 and Tyr-98 each coordinate L-kynurenine. FAD contacts are provided by residues Arg-111, Leu-135, Asp-311, and 324–325 (MN). Residues Asn-369 and Tyr-404 each contribute to the L-kynurenine site.

The protein belongs to the aromatic-ring hydroxylase family. KMO subfamily. FAD serves as cofactor.

It catalyses the reaction L-kynurenine + NADPH + O2 + H(+) = 3-hydroxy-L-kynurenine + NADP(+) + H2O. The protein operates within cofactor biosynthesis; NAD(+) biosynthesis; quinolinate from L-kynurenine: step 1/3. Its pathway is siderophore biosynthesis; quinolobactin biosynthesis. Functionally, catalyzes the hydroxylation of L-kynurenine (L-Kyn) to form 3-hydroxy-L-kynurenine (L-3OHKyn). Probably required for the synthesis of quinolinic acid and the siderophore quinolobactin. This is Kynurenine 3-monooxygenase from Pseudomonas fluorescens.